An 89-amino-acid chain; its full sequence is Small ribosomal subunit protein uS14 (89 aa).

The protein belongs to the universal ribosomal protein uS14 family. Part of the 30S ribosomal subunit. Contacts proteins S3 and S10.

Its function is as follows. Binds 16S rRNA, required for the assembly of 30S particles and may also be responsible for determining the conformation of the 16S rRNA at the A site. The chain is Small ribosomal subunit protein uS14 from Cytophaga hutchinsonii (strain ATCC 33406 / DSM 1761 / CIP 103989 / NBRC 15051 / NCIMB 9469 / D465).